Reading from the N-terminus, the 320-residue chain is Aspartate carbamoyltransferase catalytic subunit (320 aa).

Residues Arg68 and Thr69 each contribute to the carbamoyl phosphate site. Residue Lys96 coordinates L-aspartate. Carbamoyl phosphate is bound by residues Arg118, His148, and Gln151. L-aspartate is bound by residues Arg181 and Arg236. Carbamoyl phosphate-binding residues include Gly277 and Pro278.

The protein belongs to the aspartate/ornithine carbamoyltransferase superfamily. ATCase family. In terms of assembly, heterododecamer (2C3:3R2) of six catalytic PyrB chains organized as two trimers (C3), and six regulatory PyrI chains organized as three dimers (R2).

The enzyme catalyses carbamoyl phosphate + L-aspartate = N-carbamoyl-L-aspartate + phosphate + H(+). It functions in the pathway pyrimidine metabolism; UMP biosynthesis via de novo pathway; (S)-dihydroorotate from bicarbonate: step 2/3. Catalyzes the condensation of carbamoyl phosphate and aspartate to form carbamoyl aspartate and inorganic phosphate, the committed step in the de novo pyrimidine nucleotide biosynthesis pathway. The protein is Aspartate carbamoyltransferase catalytic subunit of Polaromonas naphthalenivorans (strain CJ2).